Reading from the N-terminus, the 480-residue chain is 3-isopropylmalate dehydratase large subunit (480 aa).

[4Fe-4S] cluster-binding residues include Cys357, Cys417, and Cys420. A compositionally biased stretch (polar residues) spans 431–441 (GQRCASTSNRN). Positions 431 to 454 (GQRCASTSNRNFEGRQGKGGRTHL) are disordered.

This sequence belongs to the aconitase/IPM isomerase family. LeuC type 1 subfamily. Heterodimer of LeuC and LeuD. [4Fe-4S] cluster serves as cofactor.

It catalyses the reaction (2R,3S)-3-isopropylmalate = (2S)-2-isopropylmalate. It functions in the pathway amino-acid biosynthesis; L-leucine biosynthesis; L-leucine from 3-methyl-2-oxobutanoate: step 2/4. In terms of biological role, catalyzes the isomerization between 2-isopropylmalate and 3-isopropylmalate, via the formation of 2-isopropylmaleate. In Mycobacteroides abscessus (strain ATCC 19977 / DSM 44196 / CCUG 20993 / CIP 104536 / JCM 13569 / NCTC 13031 / TMC 1543 / L948) (Mycobacterium abscessus), this protein is 3-isopropylmalate dehydratase large subunit.